We begin with the raw amino-acid sequence, 246 residues long: UPF0246 protein str1967 (246 aa).

Belongs to the UPF0246 family.

In Streptococcus thermophilus (strain CNRZ 1066), this protein is UPF0246 protein str1967.